The following is a 406-amino-acid chain: Propionate kinase (406 aa).

N11 and K18 together coordinate ATP. N11 contributes to the Mg(2+) binding site. R86 contacts substrate. The active-site Proton donor/acceptor is the D143. Residues H175, 203-207 (HLGNG), 278-280 (DMR), and 326-330 (GIGEN) each bind ATP.

Belongs to the acetokinase family. TdcD subfamily. In terms of assembly, homodimer. It depends on Mg(2+) as a cofactor.

It carries out the reaction propanoate + ATP = propanoyl phosphate + ADP. It participates in amino-acid degradation; L-threonine degradation via propanoate pathway; propanoate from L-threonine: step 4/4. Catalyzes the conversion of propionyl phosphate and ADP to propionate and ATP. The chain is Propionate kinase from Yersinia enterocolitica serotype O:8 / biotype 1B (strain NCTC 13174 / 8081).